The following is a 209-amino-acid chain: CASP-like protein 1B1 (209 aa).

Residues 1 to 10 show a composition bias toward basic and acidic residues; sequence MDLERGDKKP. Positions 1-39 are disordered; that stretch reads MDLERGDKKPPPPPPPAPRTAAATTTTTTTPACSGKKRP. Topologically, residues 1-49 are cytoplasmic; it reads MDLERGDKKPPPPPPPAPRTAAATTTTTTTPACSGKKRPPLRDSLVALQ. Residues 19-32 show a composition bias toward low complexity; the sequence is RTAAATTTTTTTPA. The helical transmembrane segment at 50 to 70 threads the bilayer; that stretch reads PVLLRAAAALAAAAAAAVMAL. The Extracellular portion of the chain corresponds to 71–100; the sequence is DAQSYTAVVAIVGTRPLTQTFTAKFSDTPA. Residues 101–121 traverse the membrane as a helical segment; that stretch reads FVYFVIANAIAAAYNLLVLLV. Residues 122 to 134 lie on the Cytoplasmic side of the membrane; that stretch reads RRRRRTTAGLVVR. The chain crosses the membrane as a helical span at residues 135–155; that stretch reads MLDMVVMALLATGAAAAASMA. Over 156 to 180 the chain is Extracellular; it reads ELGRNGNARARWNPVCDRFGSFCRR. The chain crosses the membrane as a helical span at residues 181-201; that stretch reads GGAALAASFVGVALMLALNLL. Residues 202-209 lie on the Cytoplasmic side of the membrane; that stretch reads SAASGAGC.

This sequence belongs to the Casparian strip membrane proteins (CASP) family. In terms of assembly, homodimer and heterodimers.

The protein localises to the cell membrane. This is CASP-like protein 1B1 from Zea mays (Maize).